The chain runs to 201 residues: Pyrrolidone-carboxylate peptidase (201 aa).

Residues Glu81, Cys143, and His168 contribute to the active site.

The protein belongs to the peptidase C15 family. Homotetramer.

It is found in the cytoplasm. It carries out the reaction Release of an N-terminal pyroglutamyl group from a polypeptide, the second amino acid generally not being Pro.. Removes 5-oxoproline from various penultimate amino acid residues except L-proline. The sequence is that of Pyrrolidone-carboxylate peptidase (pcp) from Halalkalibacterium halodurans (strain ATCC BAA-125 / DSM 18197 / FERM 7344 / JCM 9153 / C-125) (Bacillus halodurans).